A 142-amino-acid chain; its full sequence is Hemoglobin subunit alpha (142 aa).

S1 bears the N-acetylserine mark. The Globin domain occupies 1–142 (SLSDKDKNTV…LALALSERYR (142 aa)). An O2-binding site is contributed by H59. H88 lines the heme b pocket.

It belongs to the globin family. As to quaternary structure, heterotetramer of two alpha chains and two beta chains. Can form polymers. Red blood cells.

In terms of biological role, involved in oxygen transport from gills to the various peripheral tissues. This is Hemoglobin subunit alpha (hba) from Chelidonichthys kumu (Bluefin gurnard).